Here is a 107-residue protein sequence, read N- to C-terminus: Small ribosomal subunit protein uS17 (107 aa).

This sequence belongs to the universal ribosomal protein uS17 family. In terms of assembly, part of the 30S ribosomal subunit.

In terms of biological role, one of the primary rRNA binding proteins, it binds specifically to the 5'-end of 16S ribosomal RNA. The protein is Small ribosomal subunit protein uS17 of Thermotoga maritima (strain ATCC 43589 / DSM 3109 / JCM 10099 / NBRC 100826 / MSB8).